Reading from the N-terminus, the 179-residue chain is Large ribosomal subunit protein uL6 (179 aa).

It belongs to the universal ribosomal protein uL6 family. In terms of assembly, part of the 50S ribosomal subunit.

This protein binds to the 23S rRNA, and is important in its secondary structure. It is located near the subunit interface in the base of the L7/L12 stalk, and near the tRNA binding site of the peptidyltransferase center. This is Large ribosomal subunit protein uL6 from Geobacter metallireducens (strain ATCC 53774 / DSM 7210 / GS-15).